A 288-amino-acid polypeptide reads, in one-letter code: Beta-lactamase PSE-1 (288 aa).

Positions 1–17 (MKFLLAFSLLIPSVVFA) are cleaved as a signal peptide. The active-site Acyl-ester intermediate is S65. A disulfide bridge links C72 with C118. 229–231 (RSG) contacts substrate.

It belongs to the class-A beta-lactamase family. In terms of assembly, monomer.

The enzyme catalyses a beta-lactam + H2O = a substituted beta-amino acid. With respect to regulation, inhibited by p-chloromercuribenzoate but not by cloxacillin. Hydrolyzes penicillin, ampicillin and carbenicillin but not other antibiotics including oxacillin, methicillin and cloxacillin. This is Beta-lactamase PSE-1 from Pseudomonas aeruginosa.